The primary structure comprises 170 residues: Protein SprT (170 aa).

Residues 22 to 165 (LQLANQHLGT…RQCGEKLQFI (144 aa)) enclose the SprT-like domain. Histidine 78 serves as a coordination point for Zn(2+). Residue glutamate 79 is part of the active site. A Zn(2+)-binding site is contributed by histidine 82.

This sequence belongs to the SprT family. Zn(2+) serves as cofactor.

It is found in the cytoplasm. This is Protein SprT from Yersinia pseudotuberculosis serotype IB (strain PB1/+).